Consider the following 385-residue polypeptide: Probable splicing factor YJU2B (385 aa).

The interval 1–26 (MGERKGQNKYYPPDFNPEKHGSLNRY) is disordered. Residue serine 40 is modified to Phosphoserine. Residues 182–214 (LNSMLRRHFREKKKAMQEEEEKDQALQAKASLA) adopt a coiled-coil conformation. Residues 257–385 (PSAQGPSASS…VADYSDSESE (129 aa)) form a disordered region. Over residues 258 to 271 (SAQGPSASSSKASS) the composition is skewed to low complexity. Serine 306 carries the post-translational modification Phosphoserine. The segment covering 359-373 (GSSQEDLLNPNTPNA) has biased composition (polar residues).

This sequence belongs to the CWC16 family.

The protein localises to the nucleus. Functionally, may be involved in mRNA splicing. The chain is Probable splicing factor YJU2B (Yju2b) from Mus musculus (Mouse).